Consider the following 64-residue polypeptide: Large ribosomal subunit protein bL35 (64 aa).

Belongs to the bacterial ribosomal protein bL35 family.

This Colwellia psychrerythraea (strain 34H / ATCC BAA-681) (Vibrio psychroerythus) protein is Large ribosomal subunit protein bL35.